We begin with the raw amino-acid sequence, 290 residues long: 4-diphosphocytidyl-2-C-methyl-D-erythritol kinase (290 aa).

Lysine 13 is a catalytic residue. Residue 93 to 103 (PVQAGLGGGSA) coordinates ATP. Residue aspartate 135 is part of the active site.

It belongs to the GHMP kinase family. IspE subfamily.

It catalyses the reaction 4-CDP-2-C-methyl-D-erythritol + ATP = 4-CDP-2-C-methyl-D-erythritol 2-phosphate + ADP + H(+). It functions in the pathway isoprenoid biosynthesis; isopentenyl diphosphate biosynthesis via DXP pathway; isopentenyl diphosphate from 1-deoxy-D-xylulose 5-phosphate: step 3/6. Catalyzes the phosphorylation of the position 2 hydroxy group of 4-diphosphocytidyl-2C-methyl-D-erythritol. In Desulfitobacterium hafniense (strain Y51), this protein is 4-diphosphocytidyl-2-C-methyl-D-erythritol kinase.